A 188-amino-acid polypeptide reads, in one-letter code: PRA1 family protein F4 (188 aa).

Polar residues predominate over residues 1 to 13 (MANNDEITTSSHA). Positions 1-25 (MANNDEITTSSHASPAVNHESISRA) are disordered. Helical transmembrane passes span 67-86 (YFRS…SLIW), 90-107 (SLIV…LYFL), 119-139 (IDDR…LLLT), and 142-162 (TFNI…HAVI).

The protein belongs to the PRA1 family.

Its subcellular location is the endosome membrane. May be involved in both secretory and endocytic intracellular trafficking in the endosomal/prevacuolar compartments. The protein is PRA1 family protein F4 (PRA1F4) of Arabidopsis thaliana (Mouse-ear cress).